Consider the following 305-residue polypeptide: Methionyl-tRNA formyltransferase (305 aa).

Residue Ser111–Pro114 coordinates (6S)-5,6,7,8-tetrahydrofolate.

The protein belongs to the Fmt family.

It carries out the reaction L-methionyl-tRNA(fMet) + (6R)-10-formyltetrahydrofolate = N-formyl-L-methionyl-tRNA(fMet) + (6S)-5,6,7,8-tetrahydrofolate + H(+). In terms of biological role, attaches a formyl group to the free amino group of methionyl-tRNA(fMet). The formyl group appears to play a dual role in the initiator identity of N-formylmethionyl-tRNA by promoting its recognition by IF2 and preventing the misappropriation of this tRNA by the elongation apparatus. This is Methionyl-tRNA formyltransferase from Campylobacter jejuni (strain RM1221).